The primary structure comprises 360 residues: Iron uptake protein A1 (360 aa).

Positions 1–28 (MVQKLSRRLFLSIGTAFTVVVGSQLLSS) are cleaved as a signal peptide. Cys29 carries N-palmitoyl cysteine lipidation. The S-diacylglycerol cysteine moiety is linked to residue Cys29. His54, Tyr55, Tyr185, Tyr241, and Tyr242 together coordinate Fe cation.

The protein belongs to the bacterial solute-binding protein 1 family.

Its subcellular location is the cellular thylakoid membrane. The protein localises to the cell membrane. Functionally, plays an important role in protecting the acceptor side of photosystem II (PSII) against oxidative damage, especially under iron-limiting growth conditions. The differing subcellular locations of futA1 (predominantly thylakoid lumen) and futA2 (predominantly periplasmic) suggest they may fulfill different roles. Its function is as follows. A major iron-binding protein involved in Fe(3+) uptake, probably part of a periplasmic ABC transporter complex futA1A2BC (TC 3.A.1.10.2) involved in Fe(3+) ion import (ferric iron). This protein and futA2 (slr0531) may be subunit proteins that have redundant or overlapping substrate-binding functions. The sequence is that of Iron uptake protein A1 (futA1) from Synechocystis sp. (strain ATCC 27184 / PCC 6803 / Kazusa).